Reading from the N-terminus, the 76-residue chain is Serine proteinase inhibitor IA-2 (76 aa).

Serine 1 is modified (N-acetylserine).

It belongs to the protease inhibitor I9 family.

Specifically inhibits an intracellular serine proteinase (proteinase A). The sequence is that of Serine proteinase inhibitor IA-2 from Pleurotus ostreatus (Oyster mushroom).